We begin with the raw amino-acid sequence, 250 residues long: 5'-nucleotidase SurE (250 aa).

Positions 8, 9, 39, and 95 each coordinate a divalent metal cation.

The protein belongs to the SurE nucleotidase family. The cofactor is a divalent metal cation.

It localises to the cytoplasm. The catalysed reaction is a ribonucleoside 5'-phosphate + H2O = a ribonucleoside + phosphate. In terms of biological role, nucleotidase that shows phosphatase activity on nucleoside 5'-monophosphates. The sequence is that of 5'-nucleotidase SurE from Cupriavidus necator (strain ATCC 17699 / DSM 428 / KCTC 22496 / NCIMB 10442 / H16 / Stanier 337) (Ralstonia eutropha).